The chain runs to 31 residues: Aspartate racemase (31 aa).

Residues 1-31 (PVAPEYLFKKEEDKGANKEEEEVAPELGIRA) are disordered. Basic and acidic residues predominate over residues 7-18 (LFKKEEDKGANK).

The protein belongs to the aspartate/glutamate racemases family. It depends on pyridoxal 5'-phosphate as a cofactor.

The catalysed reaction is L-aspartate = D-aspartate. With respect to regulation, inhibited by hydroxylamine, aminooxyacetate, phenylhydrazine and sodium borohydride. In terms of biological role, highly specific toward aspartate and entirely inactive on glutamate, alanine and serine. The sequence is that of Aspartate racemase from Anadara broughtonii (Blood clam).